A 910-amino-acid polypeptide reads, in one-letter code: Seizure 6-like protein 2 (910 aa).

A signal peptide spans 1-27 (MGTPKAQHPPPSQLLLLILLSCAWIEG). The Extracellular segment spans residues 28 to 844 (LPLKEDEMMP…DPSRQLEGGN (817 aa)). Residues 70 to 152 (PGSDPDPTLA…PLRPEGGEEE (83 aa)) form a disordered region. Residues 123–145 (LTPPPGTTAPPPPGPASPVPPLR) show a composition bias toward pro residues. Residues Cys173 and Cys202 are joined by a disulfide bond. The 114-residue stretch at 173 to 286 (CNNNISEGEG…NGFRIHYQAY (114 aa)) folds into the CUB 1 domain. Asn222 carries an N-linked (GlcNAc...) asparagine glycan. The Sushi 1 domain occupies 288-347 (LSCGFPPRPAHGDVSVTDLHPGGTATFHCDSGYQLQGEETLICLNGTRPAWTGEPPSCTA). 12 disulfide bridges follow: Cys290–Cys330, Cys316–Cys345, Cys349–Cys376, Cys464–Cys508, Cys491–Cys523, Cys527–Cys553, Cys644–Cys686, Cys672–Cys699, Cys705–Cys747, Cys733–Cys764, Cys771–Cys813, and Cys799–Cys828. 4 N-linked (GlcNAc...) asparagine glycosylation sites follow: Asn332, Asn373, Asn473, and Asn517. Positions 349-459 (CGGTIHNATL…LLLSLRFEAF (111 aa)) constitute a CUB 2 domain. One can recognise a Sushi 2 domain in the interval 462 to 525 (DRCFPPFLAH…WNDTEPACKA (64 aa)). A CUB 3 domain is found at 527 to 638 (CGGELSEPAG…QGFVLHFKEV (112 aa)). Sushi domains lie at 642–701 (DTCP…ACQK), 703–766 (MTCA…KCAL), and 769–830 (EPCL…LCKV). A helical membrane pass occupies residues 845 to 865 (LALAILLPLGLVIVLGIGVYI). The Cytoplasmic segment spans residues 866–910 (YYTKLQGKSLFGFSGSHSYSPITVESDFSNPLYEAGDTREYEVSI).

This sequence belongs to the SEZ6 family. Expressed exclusively in the brain, predominantly in the neurons. Wide expression in the gray matter of the brain with high levels in the olfactory bulb, anterior olfactory nuclei, hippocampal formation and cerebellar cortex. Detected diffusely and weakly in the white matter, such as the corpus callosum and cerebellar medulla. In the cerebellar cortex, intensely expressed in Purkinje cells (PC) and granule cells. Detected also in interneurons in the molecular layer. Up-regulated at two weeks after birth.

It is found in the cell membrane. The protein resides in the endoplasmic reticulum membrane. Its function is as follows. May contribute to specialized endoplasmic reticulum functions in neurons. The sequence is that of Seizure 6-like protein 2 (Sez6l2) from Mus musculus (Mouse).